Here is a 472-residue protein sequence, read N- to C-terminus: MNNSQGRVTFEDVTVNFTQGEWQRLNPEQRNLYRDVMLENYSNLVSVGQGETTKPDVILRLEQGKEPWLEEEEVLGSGRAEKNGDIGGQIWKPKDVKESLAREVPSINKETLTTQKGVECDGSKKILPLGIDDVSSLQHYVQNNSHDDNGYRKLVGNNPSKFVGQQLKCNACRKLFSSKSRLQSHLRRHACQKPFECHSCGRAFGEKWKLDKHQKTHAEERPYKCENCGNAYKQKSNLFQHQKMHTKEKPYQCKTCGKAFSWKSSCINHEKIHNAKKSYQCNECEKSFRQNSTLIQHKKVHTGQKPFQCTDCGKAFIYKSDLVKHQRIHTGEKPYKCSICEKAFSQKSNVIDHEKIHTGKRAYECDLCGNTFIQKKNLIQHKKIHTGEKPYECNRCGKAFFQKSNLHSHQKTHSGERTYRCSECGKTFIRKLNLSLHKKTHTGQKPYGCSECGKAFADRSYLVRHQKRIHSR.

In terms of domain architecture, KRAB spans 8-80 (VTFEDVTVNF…EEEVLGSGRA (73 aa)). C2H2-type zinc fingers lie at residues 167–189 (LKCN…LRRH), 195–217 (FECH…QKTH), 223–245 (YKCE…QKMH), 251–273 (YQCK…EKIH), 279–301 (YQCN…KKVH), 307–329 (FQCT…QRIH), 335–357 (YKCS…EKIH), 363–385 (YECD…KKIH), 391–413 (YECN…QKTH), 419–441 (YRCS…KKTH), and 447–470 (YGCS…KRIH).

This sequence belongs to the krueppel C2H2-type zinc-finger protein family.

It is found in the nucleus. May be involved in transcriptional regulation. The chain is Zinc finger imprinted 3 (ZIM3) from Homo sapiens (Human).